A 253-amino-acid polypeptide reads, in one-letter code: MKALHLQHRSPTSYRVKARASYVDETLFGSPARTRPAQPDFDPPWVQNCNRSRGVGPGPPKGSLAKRDCESPSSRGSTPNLTPRKKNKYRLIGHAPSYCDESLFGTSKEGSRMAVGDAAKLRTLFWTPPATPRGSHTPCPRETPLRAIHPAGPSRTEPRVTAGSQMSSQDGLCVPCSLGQRRSHSLTHLTVPSTGHPASSAPQTNGPWSPRPNTSGATVQSPLVTSKACSGRVSGPAPPRRGACPPKPKPPWK.

Disordered stretches follow at residues Ser-30–Tyr-89, Thr-127–Pro-175, and His-188–Lys-253. Positions Ser-71–Leu-81 are enriched in polar residues. A Nuclear localization signal motif is present at residues Leu-81–Ser-97. Residues Arg-112–Pro-140 are interaction with RBPJ/RBPSUH. Residues Pro-140–Lys-253 form an interaction with tubulin region. Positions His-188–Ala-228 are enriched in polar residues.

This sequence belongs to the RITA family. In terms of assembly, interacts with RBPJ/RBPSUH.

The protein resides in the cytoplasm. Its subcellular location is the nucleus. It localises to the cytoskeleton. It is found in the microtubule organizing center. The protein localises to the centrosome. Tubulin-binding protein that acts as a negative regulator of Notch signaling pathway. Shuttles between the cytoplasm and the nucleus and mediates the nuclear export of RBPJ/RBPSUH, thereby preventing the interaction between RBPJ/RBPSUH and NICD product of Notch proteins (Notch intracellular domain), leading to down-regulate Notch-mediated transcription. May play a role in neurogenesis. The polypeptide is RBPJ-interacting and tubulin-associated protein 1 (Rita1) (Mus musculus (Mouse)).